Consider the following 439-residue polypeptide: GTPase Der (439 aa).

EngA-type G domains lie at 4–169 and 177–352; these read AMVA…PEND and IKIA…EEYN. GTP is bound by residues 10–17, 57–61, 120–123, 183–190, 230–234, and 295–298; these read GRPNVGKS, DTGGL, NKVD, DTAGI, and NKWD. The KH-like domain maps to 353 to 437; the sequence is KRITTGLLNN…PIVISTKKRG (85 aa).

It belongs to the TRAFAC class TrmE-Era-EngA-EngB-Septin-like GTPase superfamily. EngA (Der) GTPase family. Associates with the 50S ribosomal subunit.

Its function is as follows. GTPase that plays an essential role in the late steps of ribosome biogenesis. The sequence is that of GTPase Der from Caldanaerobacter subterraneus subsp. tengcongensis (strain DSM 15242 / JCM 11007 / NBRC 100824 / MB4) (Thermoanaerobacter tengcongensis).